Here is a 453-residue protein sequence, read N- to C-terminus: tRNA modification GTPase MnmE (453 aa).

Arg-22, Glu-79, and Lys-119 together coordinate (6S)-5-formyl-5,6,7,8-tetrahydrofolate. The 162-residue stretch at 215 to 376 folds into the TrmE-type G domain; that stretch reads GMKVVIAGRP…LKQHLKSLMG (162 aa). K(+) is bound at residue Asn-225. GTP contacts are provided by residues 225–230, 244–250, 269–272, and 334–337; these read NAGKSS, TEIAGTT, DTAG, and NKAD. Position 229 (Ser-229) interacts with Mg(2+). Residues Thr-244, Ile-246, and Thr-249 each coordinate K(+). Residue Thr-250 participates in Mg(2+) binding. Lys-453 lines the (6S)-5-formyl-5,6,7,8-tetrahydrofolate pocket.

It belongs to the TRAFAC class TrmE-Era-EngA-EngB-Septin-like GTPase superfamily. TrmE GTPase family. As to quaternary structure, homodimer. Heterotetramer of two MnmE and two MnmG subunits. K(+) serves as cofactor.

It is found in the cytoplasm. Exhibits a very high intrinsic GTPase hydrolysis rate. Involved in the addition of a carboxymethylaminomethyl (cmnm) group at the wobble position (U34) of certain tRNAs, forming tRNA-cmnm(5)s(2)U34. This chain is tRNA modification GTPase MnmE, found in Shewanella oneidensis (strain ATCC 700550 / JCM 31522 / CIP 106686 / LMG 19005 / NCIMB 14063 / MR-1).